Reading from the N-terminus, the 494-residue chain is Inositol-trisphosphate 3-kinase homolog (494 aa).

Residues Ser206, Lys218, 260 to 262 (EDL), and Asp276 each bind ATP. Residues Lys278 and 322–329 (KLRYMQFR) each bind substrate. 2 residues coordinate ATP: Lys346 and Asp426. Residue Lys429 participates in substrate binding.

This sequence belongs to the inositol phosphokinase (IPK) family. Expressed in spermatheca.

The catalysed reaction is 1D-myo-inositol 1,4,5-trisphosphate + ATP = 1D-myo-inositol 1,3,4,5-tetrakisphosphate + ADP + H(+). Its activity is regulated as follows. Unlike mammalian IP3K, may not be regulated by calmodulin. Functionally, probably by regulating inositol 1,4,5-trisphosphate levels, negatively regulates posterior body wall muscle contractions required for defecation and let-23 signaling pathway that controls spermathecal dilation and ovulation. May also regulate ovulation downstream of actin cross-linker fln-1. This chain is Inositol-trisphosphate 3-kinase homolog, found in Caenorhabditis elegans.